We begin with the raw amino-acid sequence, 222 residues long: MIF4G domain-containing protein B (222 aa).

The region spanning 3–205 (NSSKEDYKIQ…LEILEFRAGG (203 aa)) is the MIF4G domain.

This sequence belongs to the MIF4GD family. Interacts with eif4g1, eif4g2 and slbp; probably tethered by SLBP to the 3'-end of mRNAs ending with the histone stem-loop, it also interacts with eif4g1 which is bound to their 5'-end.

It is found in the cytoplasm. It localises to the nucleus. In terms of biological role, functions in replication-dependent translation of histone mRNAs which differ from other eukaryotic mRNAs in that they do not end with a poly-A tail but a stem-loop. May participate in circularizing those mRNAs specifically enhancing their translation. The sequence is that of MIF4G domain-containing protein B (mif4gdb) from Danio rerio (Zebrafish).